Consider the following 162-residue polypeptide: Eukaryotic translation initiation factor 5 (162 aa).

The interval 59–162 is disordered; it reads PPNLNPAVQG…EKDRMDIFYE (104 aa). Residues 85–109 show a composition bias toward polar residues; sequence GDTNGDTSQVDDQNESLEASVNENS. Positions 148-162 are enriched in basic and acidic residues; the sequence is DLEKREKDRMDIFYE.

This sequence belongs to the eIF-2-beta/eIF-5 family.

Functionally, catalyzes the hydrolysis of GTP bound to the 40S ribosomal initiation complex (40S.mRNA.Met-tRNA[F].eIF-2.GTP) with the subsequent joining of a 60S ribosomal subunit resulting in the release of eIF-2 and the guanine nucleotide. The subsequent joining of a 60S ribosomal subunit results in the formation of a functional 80S initiation complex (80S.mRNA.Met-tRNA[F]). This chain is Eukaryotic translation initiation factor 5, found in Tribolium castaneum (Red flour beetle).